We begin with the raw amino-acid sequence, 125 residues long: uncharacterized protein (125 aa).

This is an uncharacterized protein from Dictyostelium discoideum (Social amoeba).